We begin with the raw amino-acid sequence, 406 residues long: MSQPITRENFDEWMIPVYAPAPFIPVRGEGSRLWDQQGKEYIDFAGGIAVNALGHAHPELREALNEQASKFWHTGNGYTNEPVLRLAKKLIDATFADRVFFCNSGAEANEAALKLARKFAHDRYGSHKSGIVAFKNAFHGRTLFTVSAGGQPAYSQDFAPLPPDIRHAAYNDINSASALIDDSTCAVIVEPIQGEGGVVPASNAFLHGLRELCDRHNALLIFDEVQTGVGRTGELYAYMHYGVTPDLLTTAKALGGGFPVGALLATEECASVMTVGTHGTTYGGNPLASAVAGKVLDLINTPEMLNGVKQRHDWFVERLNTVNHRCGLFSEVRGLGLLIGCVLNADYAGQAKQISQEAAKAGVMVLIAGGNVVRFAPALNVSEEEVTTGLDRFAAACDHFVSRGSS.

At Lys-252 the chain carries N6-(pyridoxal phosphate)lysine.

The protein belongs to the class-III pyridoxal-phosphate-dependent aminotransferase family. AstC subfamily. Pyridoxal 5'-phosphate serves as cofactor.

It carries out the reaction N(2)-succinyl-L-ornithine + 2-oxoglutarate = N-succinyl-L-glutamate 5-semialdehyde + L-glutamate. The protein operates within amino-acid degradation; L-arginine degradation via AST pathway; L-glutamate and succinate from L-arginine: step 3/5. Functionally, catalyzes the transamination of N(2)-succinylornithine and alpha-ketoglutarate into N(2)-succinylglutamate semialdehyde and glutamate. Can also act as an acetylornithine aminotransferase. The chain is Succinylornithine transaminase from Escherichia coli O17:K52:H18 (strain UMN026 / ExPEC).